A 356-amino-acid chain; its full sequence is UDP-N-acetylglucosamine--N-acetylmuramyl-(pentapeptide) pyrophosphoryl-undecaprenol N-acetylglucosamine transferase (356 aa).

UDP-N-acetyl-alpha-D-glucosamine is bound by residues 11-13 (TGG), Asn-117, Arg-160, Ser-188, and Gln-290.

It belongs to the glycosyltransferase 28 family. MurG subfamily.

The protein localises to the cell inner membrane. The catalysed reaction is di-trans,octa-cis-undecaprenyl diphospho-N-acetyl-alpha-D-muramoyl-L-alanyl-D-glutamyl-meso-2,6-diaminopimeloyl-D-alanyl-D-alanine + UDP-N-acetyl-alpha-D-glucosamine = di-trans,octa-cis-undecaprenyl diphospho-[N-acetyl-alpha-D-glucosaminyl-(1-&gt;4)]-N-acetyl-alpha-D-muramoyl-L-alanyl-D-glutamyl-meso-2,6-diaminopimeloyl-D-alanyl-D-alanine + UDP + H(+). Its pathway is cell wall biogenesis; peptidoglycan biosynthesis. Functionally, cell wall formation. Catalyzes the transfer of a GlcNAc subunit on undecaprenyl-pyrophosphoryl-MurNAc-pentapeptide (lipid intermediate I) to form undecaprenyl-pyrophosphoryl-MurNAc-(pentapeptide)GlcNAc (lipid intermediate II). The protein is UDP-N-acetylglucosamine--N-acetylmuramyl-(pentapeptide) pyrophosphoryl-undecaprenol N-acetylglucosamine transferase of Rickettsia bellii (strain RML369-C).